The chain runs to 355 residues: IgG receptor FcRn large subunit p51 (355 aa).

The signal sequence occupies residues 1 to 24 (MRVPRSQPWGLALLLLLLPGTLRA). Residues 25-111 (AESHRSLLYH…ALKVFGDRDS (87 aa)) are alpha-1. Residues 25-300 (AESHRSLLYH…LESPAKSSVP (276 aa)) are Extracellular-facing. Residues 112-201 (YTLQGLLGCE…ERGRGNLEWK (90 aa)) are alpha-2. Residue N126 is glycosylated (N-linked (GlcNAc...) asparagine). The segment at 202 to 291 (EPPSMRLKAR…GPAQPLTVEL (90 aa)) is alpha-3. Residues 203–292 (PPSMRLKARP…PAQPLTVELE (90 aa)) form the Ig-like C1-type domain. C222 and C276 are joined by a disulfide. The interval 293-298 (SPAKSS) is connecting peptide. A helical membrane pass occupies residues 301–321 (VIGISIGFLLLMTVAAGGALL). Residues 322–355 (WRRRKGLPAPWIAFRGDDIGALLPTPGLSKDAES) are Cytoplasmic-facing.

This sequence belongs to the immunoglobulin superfamily. As to quaternary structure, fcRn complex consists of two subunits: p51, and p14 which is equivalent to beta-2-microglobulin. It forms an MHC class I-like heterodimer. Interacts with albumin/ALB; this interaction regulates ALB homeostasis. Expressed in liver and mammary gland of non-lactating animals. Expressed in hepatocytes and in epithelial cells of portal bile ductuli. Not expressed in the brances of portal veins or hepatic arteries. Expressed in the epithelial cells of the acini and ducti in the mammary gland with expression emphasized at the apical side. Not expressed in blood vessels of mammary gland.

It is found in the cell membrane. It localises to the endosome membrane. Cell surface receptor that transfers passive humoral immunity from the mother to the newborn. Binds to the Fc region of monomeric immunoglobulin gamma and mediates its selective uptake from milk. IgG in the milk is bound at the apical surface of the intestinal epithelium. The resultant FcRn-IgG complexes are transcytosed across the intestinal epithelium and IgG is released from FcRn into blood or tissue fluids. Throughout life, contributes to effective humoral immunity by recycling IgG and extending its half-life in the circulation. Mechanistically, monomeric IgG binding to FcRn in acidic endosomes of endothelial and hematopoietic cells recycles IgG to the cell surface where it is released into the circulation. In addition of IgG, regulates homeostasis of the other most abundant circulating protein albumin/ALB. The chain is IgG receptor FcRn large subunit p51 from Camelus dromedarius (Dromedary).